The sequence spans 344 residues: Serine/threonine-protein kinase ppk13 (344 aa).

ATP is bound by residues Leu-38 to Val-46 and Lys-61. The Protein kinase domain occupies Met-76 to Gln-344. The active-site Proton acceptor is the His-192.

This sequence belongs to the protein kinase superfamily. Ser/Thr protein kinase family.

Its subcellular location is the endoplasmic reticulum. It is found in the golgi apparatus. The catalysed reaction is L-seryl-[protein] + ATP = O-phospho-L-seryl-[protein] + ADP + H(+). It catalyses the reaction L-threonyl-[protein] + ATP = O-phospho-L-threonyl-[protein] + ADP + H(+). The sequence is that of Serine/threonine-protein kinase ppk13 (ppk13) from Schizosaccharomyces pombe (strain 972 / ATCC 24843) (Fission yeast).